The primary structure comprises 195 residues: Ras-related protein Rab-31 (195 aa).

GTP-binding residues include Gly-16, Gly-18, Lys-19, Ser-20, Ser-21, Asp-32, and His-33. Ser-20 lines the Mg(2+) pocket. Short sequence motifs (switch) lie at residues 30–42 and 63–79; these read HFDH…IGAS and AGQE…YRGS. Residue Ser-36 is modified to Phosphoserine. Residues Thr-38, Gly-64, Asn-119, Asp-122, Ala-150, and Lys-151 each contribute to the GTP site. Thr-38 serves as a coordination point for Mg(2+). The tract at residues 168–195 is disordered; that stretch reads PPLGPQENGNSGGIKLGNQSLQASRRCC. The span at 184 to 195 shows a compositional bias: polar residues; the sequence is GNQSLQASRRCC. 2 S-geranylgeranyl cysteine lipidation sites follow: Cys-194 and Cys-195.

Belongs to the small GTPase superfamily. Rab family. In terms of assembly, interacts with OCRL. Interacts (in GDP-bound form) with RIN3 and GAPVD1, which function as guanine exchange factors (GEF). Interacts with EGFR. Interacts with NGFR. Interacts (in GTP-bound form) with EEA1. Interacts (in GTP-bound form) with APPL2; interaction contributes to or enhances recruitment of APPL2 to the phagosomes; interaction enhances Fc-gamma receptor-mediated phagocytosis through PI3K/Akt signaling in macrophages. Requires Mg(2+) as cofactor. As to expression, detected in brain astrocytes (at protein level).

It localises to the early endosome. The protein resides in the golgi apparatus. The protein localises to the trans-Golgi network. Its subcellular location is the trans-Golgi network membrane. It is found in the cytoplasmic vesicle. It localises to the phagosome. The protein resides in the phagosome membrane. It carries out the reaction GTP + H2O = GDP + phosphate + H(+). Regulated by guanine nucleotide exchange factors (GEFs) including RIN3 and GAPVD1 which promote the exchange of bound GDP for free GTP. Regulated by GTPase activating proteins (GAPs) which increase the GTP hydrolysis activity. Inhibited by GDP dissociation inhibitors (GDIs) which prevent Rab-GDP dissociation. The small GTPases Rab are key regulators of intracellular membrane trafficking, from the formation of transport vesicles to their fusion with membranes. Rabs cycle between an inactive GDP-bound form and an active GTP-bound form that is able to recruit to membranes different set of downstream effectors directly responsible for vesicle formation, movement, tethering and fusion. Required for the integrity and for normal function of the Golgi apparatus and the trans-Golgi network. Plays a role in insulin-stimulated translocation of GLUT4 to the cell membrane. Plays a role in the maturation of phagosomes that engulf pathogens, such as S.aureus and Mycobacterium. Plays a role in M6PR transport from the trans-Golgi network to endosomes. Plays a role in the internalization of EGFR from the cell membrane into endosomes. The sequence is that of Ras-related protein Rab-31 from Mus musculus (Mouse).